The chain runs to 410 residues: Peptidase T (410 aa).

H79 provides a ligand contact to Zn(2+). Residue D81 is part of the active site. Residue D142 coordinates Zn(2+). Residue E176 is the Proton acceptor of the active site. Zn(2+) is bound by residues E177, D199, and H381.

This sequence belongs to the peptidase M20B family. Zn(2+) serves as cofactor.

The protein localises to the cytoplasm. The enzyme catalyses Release of the N-terminal residue from a tripeptide.. In terms of biological role, cleaves the N-terminal amino acid of tripeptides. The sequence is that of Peptidase T from Geobacillus sp. (strain WCH70).